We begin with the raw amino-acid sequence, 263 residues long: Small ribosomal subunit protein eS4 (263 aa).

One can recognise an S4 RNA-binding domain in the interval 42–104 (LPLIIFLRNR…TGENFRLIYD (63 aa)).

Belongs to the eukaryotic ribosomal protein eS4 family.

This Bos taurus (Bovine) protein is Small ribosomal subunit protein eS4 (RPS4).